A 736-amino-acid polypeptide reads, in one-letter code: Dynamin-1-like protein (736 aa).

An N-acetylmethionine modification is found at methionine 1. In terms of domain architecture, Dynamin-type G spans 22-302 (IIQLPQIVVV…LMHHIRDCLP (281 aa)). The segment at 32 to 39 (GTQSSGKS) is G1 motif. Residue 32-40 (GTQSSGKSS) participates in GTP binding. The segment at 58-60 (VTR) is G2 motif. Positions 146-149 (DLPG) are G3 motif. The interval 215–218 (TKLD) is G4 motif. Residues 215 to 221 (TKLDLMD) and 246 to 249 (NRSQ) each bind GTP. The segment at 245–248 (VNRS) is G5 motif. The interval 344–489 (YCNTIEGTAK…NEMVHNLVAI (146 aa)) is middle domain. Residues 448–685 (NYSTQELLRF…NHVKDTLQSE (238 aa)) form an interaction with GSK3B region. The interval 502–569 (ADACGLMNNN…IQDNRRETKN (68 aa)) is b domain. The tract at residues 522–554 (RELPSAGSRDKSSKVPSALAPASQEPPPAASAE) is disordered. Position 529 is a phosphoserine (serine 529). Residues lysine 532, lysine 535, lysine 558, and lysine 568 each participate in a glycyl lysine isopeptide (Lys-Gly) (interchain with G-Cter in SUMO) cross-link. Residues 542–736 (PASQEPPPAA…IAEIRETHLW (195 aa)) form a C-terminal dimerization domain region. The disordered stretch occupies residues 566–588 (ETKNVPSAGGGIGDGGQEPTTGN). O-linked (GlcNAc) threonine glycans are attached at residues threonine 585 and threonine 586. Lysine 594 participates in a covalent cross-link: Glycyl lysine isopeptide (Lys-Gly) (interchain with G-Cter in SUMO). Position 597 is an N6-acetyllysine; alternate (lysine 597). Lysine 597 participates in a covalent cross-link: Glycyl lysine isopeptide (Lys-Gly) (interchain with G-Cter in SUMO); alternate. A Glycyl lysine isopeptide (Lys-Gly) (interchain with G-Cter in SUMO) cross-link involves residue lysine 606. Position 607 is a phosphoserine (serine 607). Residue lysine 608 forms a Glycyl lysine isopeptide (Lys-Gly) (interchain with G-Cter in SUMO) linkage. The residue at position 616 (serine 616) is a Phosphoserine; by PINK1. Residue serine 637 is modified to Phosphoserine; by CAMK1 and PKA. Cysteine 644 bears the S-nitrosocysteine mark. One can recognise a GED domain in the interval 644–735 (CEVIERLIKS…IIAEIRETHL (92 aa)). The tract at residues 654 to 668 (YFLIVRKNIQDSVPK) is important for homodimerization.

It belongs to the TRAFAC class dynamin-like GTPase superfamily. Dynamin/Fzo/YdjA family. In terms of assembly, homotetramer; dimerizes through the N-terminal GTP-middle region of one molecule binding to the GED domain of another DNM1L molecule. Oligomerizes in a GTP-dependent manner to form membrane-associated tubules with a spiral pattern. Interacts with GSK3B and MARCHF5. Interacts (via the GTPase and B domains) with UBE2I; the interaction promotes sumoylation of DNM1L, mainly in its B domain. Interacts with PPP3CA; the interaction dephosphorylates DNM1L and regulates its transition to mitochondria. Interacts with BCL2L1 isoform BCL-X(L) and CLTA; DNM1L and BCL2L1 isoform BCL-X(L) may form a complex in synaptic vesicles that also contains clathrin and MFF. Interacts with MFF; the interaction is inhibited by C11orf65/MFI. Interacts with FIS1. Interacts with MIEF2 and MIEF1; GTP-dependent, regulates GTP hydrolysis and DNM1L oligomerization. Interacts with PGAM5; this interaction leads to dephosphorylation at Ser-656 and activation of GTPase activity and eventually to mitochondria fragmentation. Interacts with RALBP1; during mitosis, recruits DNM1L to the mitochondrion and mediates its activation by the mitotic kinase cyclin B-CDK1. Interacts with FUNDC1; this interaction recruits DNM1L/DRP1 at ER-mitochondria contact sites. In terms of processing, phosphorylation/dephosphorylation events on two sites near the GED domain regulate mitochondrial fission. Phosphorylation on Ser-637 inhibits mitochondrial fission probably through preventing intramolecular interaction. Dephosphorylated on this site by PPP3CA which promotes mitochondrial fission. Phosphorylation on Ser-616 by Pink1 activates the GTPase activity and promotes mitochondrial fission. Phosphorylated in a circadian manner at Ser-637. Dephosphorylated by PGAM5. Sumoylated on various lysine residues within the B domain, probably by MUL1. Sumoylation positively regulates mitochondrial fission. Desumoylated by SENP5 during G2/M transition of mitosis. Appears to be linked to its catalytic activity. Post-translationally, S-nitrosylation increases DNM1L dimerization, mitochondrial fission and causes neuronal damage. In terms of processing, O-GlcNAcylation augments the level of the GTP-bound active form of DNM1L and induces translocation from the cytoplasm to mitochondria in cardiomyocytes. It also decreases phosphorylation at Ser-637. Ubiquitination by MARCHF5 affects mitochondrial morphology. Expressed in the cerebellum and in several regions of the cerebrum and diencephalon. Strongly expressed in the cerebellar Purkinje cells and in the pontile giant neurons. In terms of tissue distribution, widely expressed. As to expression, brain-specific. Brain-specific (at protein level). Expressed in most of the subregions of the brain, including the cerebellum, midbrain, hippocampus, striatum, cerebral cortex, and brain stem. Weakly expressed in the olfactory bulb.

It localises to the cytoplasm. The protein resides in the cytosol. The protein localises to the golgi apparatus. Its subcellular location is the endomembrane system. It is found in the mitochondrion outer membrane. It localises to the peroxisome. The protein resides in the membrane. The protein localises to the clathrin-coated pit. Its subcellular location is the cytoplasmic vesicle. It is found in the secretory vesicle. It localises to the synaptic vesicle membrane. The protein resides in the lysosome. The protein localises to the late endosome. Its subcellular location is the cell membrane. It is found in the postsynaptic density. It carries out the reaction GTP + H2O = GDP + phosphate + H(+). Functionally, functions in mitochondrial and peroxisomal division. Mediates membrane fission through oligomerization into membrane-associated tubular structures that wrap around the scission site to constrict and sever the mitochondrial membrane through a GTP hydrolysis-dependent mechanism. The specific recruitment at scission sites is mediated by membrane receptors like MFF, MIEF1 and MIEF2 for mitochondrial membranes. While the recruitment by the membrane receptors is GTP-dependent, the following hydrolysis of GTP induces the dissociation from the receptors and allows DNM1L filaments to curl into closed rings that are probably sufficient to sever a double membrane. Acts downstream of PINK1 to promote mitochondrial fission in a PRKN-dependent manner. Plays an important role in mitochondrial fission during mitosis. Required for formation of endocytic vesicles. Through its function in mitochondrial division, ensures the survival of at least some types of postmitotic neurons, including Purkinje cells, by suppressing oxidative damage. Required for normal brain development, including that of cerebellum. Facilitates developmentally regulated apoptosis during neural tube formation. Required for a normal rate of cytochrome c release and caspase activation during apoptosis; this requirement may depend upon the cell type and the physiological apoptotic cues. Proposed to regulate synaptic vesicle membrane dynamics through association with BCL2L1 isoform Bcl-X(L) which stimulates its GTPase activity in synaptic vesicles; the function may require its recruitment by MFF to clathrin-containing vesicles. Required for programmed necrosis execution. Rhythmic control of its activity following phosphorylation at Ser-637 is essential for the circadian control of mitochondrial ATP production. Its function is as follows. Regulates postsynaptic clathrin-mediated endocytosis by positioning the endocytic zone at the postsynaptic density, independently of mitochondrial division. The protein is Dynamin-1-like protein of Mus musculus (Mouse).